The chain runs to 932 residues: Ribosome biogenesis protein ERB1 (932 aa).

Over residues Met1 to Gly18 the composition is skewed to low complexity. The interval Met1–Leu229 is disordered. Over residues Pro27 to Ala36 the composition is skewed to polar residues. Composition is skewed to acidic residues over residues Val57 to Ser119 and Asp150 to Glu172. Positions Ser175 to Ser184 are enriched in low complexity. WD repeat units follow at residues Pro555–Ser594 and Ala604–Lys644. The tract at residues Ser679 to Ala698 is disordered. 4 WD repeats span residues Ser762–Thr800, Ser803–Lys842, Tyr846–Glu885, and Lys901–Thr932.

The protein belongs to the WD repeat BOP1/ERB1 family. As to quaternary structure, component of the NOP7 complex, composed of ERB1, NOP7 and YTM1. The complex is held together by ERB1, which interacts with NOP7 via its N-terminal domain and with YTM1 via a high-affinity interaction between the seven-bladed beta-propeller domains of the 2 proteins. The NOP7 complex associates with the 66S pre-ribosome.

It is found in the nucleus. The protein localises to the nucleolus. The protein resides in the nucleoplasm. Its function is as follows. Component of the NOP7 complex, which is required for maturation of the 25S and 5.8S ribosomal RNAs and formation of the 60S ribosome. The sequence is that of Ribosome biogenesis protein ERB1 from Mycosarcoma maydis (Corn smut fungus).